A 1496-amino-acid polypeptide reads, in one-letter code: DENN domain-containing protein 4B (1496 aa).

The MABP domain maps to 44 to 203 (AEPITDVAVI…AVYLCYKVGL (160 aa)). The region spanning 195–369 (VYLCYKVGLA…NVPFPSPQRP (175 aa)) is the uDENN domain. Residues 390-526 (PLPLSGASFL…PYKVLLATLT (137 aa)) form the cDENN domain. The dDENN domain occupies 528–644 (LYQQLDQTYT…ECSFGSARHA (117 aa)). A disordered region spans residues 720-744 (QPGALPVPGPSRSAPSSPAPRRTKQ). Low complexity predominate over residues 729-739 (PSRSAPSSPAP). PPR repeat units follow at residues 775–811 (WFLC…VVLP) and 812–846 (DEVC…GIVP). Disordered stretches follow at residues 891-970 (LRER…ARGA), 995-1055 (VPWH…TPRR), 1067-1119 (PSRH…GSEW), and 1205-1227 (SRPS…PVPG). Residues 896–912 (QQQQQQQQQQQQQQQEQ) are compositionally biased toward low complexity. Polar residues-rich tracts occupy residues 913–924 (VSAHQEAGSSQA) and 935–944 (RPLQRQTTWA). Ser-953 is subject to Phosphoserine. Residues 1075–1090 (RIPPPELPPDLPPPAR) are compositionally biased toward pro residues. Ser-1092 carries the post-translational modification Phosphoserine. The span at 1105-1119 (GSTASESSASLGSEW) shows a compositional bias: low complexity.

The protein resides in the golgi apparatus. Its function is as follows. Guanine nucleotide exchange factor (GEF) which may activate RAB10. Promotes the exchange of GDP to GTP, converting inactive GDP-bound Rab proteins into their active GTP-bound form. The chain is DENN domain-containing protein 4B (DENND4B) from Homo sapiens (Human).